The chain runs to 223 residues: Lipoprotein signal peptidase (223 aa).

The tract at residues 1–20 is disordered; the sequence is MNSAKVNPSGHAPTPAPTAS. A run of 4 helical transmembrane segments spans residues 32–52, 65–85, 91–111, and 116–136; these read LFFG…EAIF, WIIE…VFGL, LVFA…LFFF, and SCWL…NLYD. Residues aspartate 156 and aspartate 175 contribute to the active site. A helical transmembrane segment spans residues 173–193; it reads IADSLLVTGAIMLLVQSFFFP. Positions 196–223 are disordered; that stretch reads PHGEADGNELPGRRAPDEPTEGTKPAAS.

The protein belongs to the peptidase A8 family.

The protein localises to the cell inner membrane. The enzyme catalyses Release of signal peptides from bacterial membrane prolipoproteins. Hydrolyzes -Xaa-Yaa-Zaa-|-(S,diacylglyceryl)Cys-, in which Xaa is hydrophobic (preferably Leu), and Yaa (Ala or Ser) and Zaa (Gly or Ala) have small, neutral side chains.. It functions in the pathway protein modification; lipoprotein biosynthesis (signal peptide cleavage). Functionally, this protein specifically catalyzes the removal of signal peptides from prolipoproteins. This Rhodopirellula baltica (strain DSM 10527 / NCIMB 13988 / SH1) protein is Lipoprotein signal peptidase.